The following is a 512-amino-acid chain: Spermatocyte protein spe-8 (512 aa).

The segment at 1 to 85 (MRSKSSEGDL…PKPSSDNNNS (85 aa)) is disordered. The span at 15 to 41 (TQSREDKETTATYSEDTKPETQKERNA) shows a compositional bias: basic and acidic residues. Positions 68-78 (EAPPPPPPPKP) are enriched in pro residues. One can recognise an SH2 domain in the interval 114-205 (FYHGFMGRNE…YEGMTLICGL (92 aa)). The Protein kinase domain maps to 217 to 485 (VTLNKKLGEG…KEEVGFHEIE (269 aa)). ATP is bound by residues 223 to 231 (LGEGQFGEV) and Lys250. The active-site Proton acceptor is Asp344.

The protein belongs to the protein kinase superfamily. Tyr protein kinase family. Fes/fps subfamily. In terms of tissue distribution, expression is restricted to male germline.

Its subcellular location is the cell membrane. The protein localises to the cytoplasm. It catalyses the reaction L-tyrosyl-[protein] + ATP = O-phospho-L-tyrosyl-[protein] + ADP + H(+). In terms of biological role, probable non-receptor tyrosine-protein kinase which plays a role in spermatid activation (spermiogenesis) in hermaphrodites. This chain is Spermatocyte protein spe-8, found in Caenorhabditis elegans.